A 153-amino-acid polypeptide reads, in one-letter code: 6,7-dimethyl-8-ribityllumazine synthase (153 aa).

5-amino-6-(D-ribitylamino)uracil-binding positions include phenylalanine 21, 55–57, and 79–81; these read AFE and TVI. (2S)-2-hydroxy-3-oxobutyl phosphate is bound at residue 84–85; sequence AT. Histidine 87 serves as the catalytic Proton donor. 5-amino-6-(D-ribitylamino)uracil is bound at residue phenylalanine 112. Arginine 126 provides a ligand contact to (2S)-2-hydroxy-3-oxobutyl phosphate.

The protein belongs to the DMRL synthase family. In terms of assembly, forms an icosahedral capsid composed of 60 subunits, arranged as a dodecamer of pentamers.

The catalysed reaction is (2S)-2-hydroxy-3-oxobutyl phosphate + 5-amino-6-(D-ribitylamino)uracil = 6,7-dimethyl-8-(1-D-ribityl)lumazine + phosphate + 2 H2O + H(+). It participates in cofactor biosynthesis; riboflavin biosynthesis; riboflavin from 2-hydroxy-3-oxobutyl phosphate and 5-amino-6-(D-ribitylamino)uracil: step 1/2. In terms of biological role, catalyzes the formation of 6,7-dimethyl-8-ribityllumazine by condensation of 5-amino-6-(D-ribitylamino)uracil with 3,4-dihydroxy-2-butanone 4-phosphate. This is the penultimate step in the biosynthesis of riboflavin. The sequence is that of 6,7-dimethyl-8-ribityllumazine synthase from Bacillus cereus (strain AH187).